A 566-amino-acid chain; its full sequence is Proline--tRNA ligase (566 aa).

This sequence belongs to the class-II aminoacyl-tRNA synthetase family. ProS type 1 subfamily. Homodimer.

It is found in the cytoplasm. The catalysed reaction is tRNA(Pro) + L-proline + ATP = L-prolyl-tRNA(Pro) + AMP + diphosphate. In terms of biological role, catalyzes the attachment of proline to tRNA(Pro) in a two-step reaction: proline is first activated by ATP to form Pro-AMP and then transferred to the acceptor end of tRNA(Pro). As ProRS can inadvertently accommodate and process non-cognate amino acids such as alanine and cysteine, to avoid such errors it has two additional distinct editing activities against alanine. One activity is designated as 'pretransfer' editing and involves the tRNA(Pro)-independent hydrolysis of activated Ala-AMP. The other activity is designated 'posttransfer' editing and involves deacylation of mischarged Ala-tRNA(Pro). The misacylated Cys-tRNA(Pro) is not edited by ProRS. The chain is Proline--tRNA ligase from Bacillus cereus (strain Q1).